A 265-amino-acid chain; its full sequence is 3-deoxy-manno-octulosonate cytidylyltransferase (265 aa).

It belongs to the KdsB family.

The protein resides in the cytoplasm. It catalyses the reaction 3-deoxy-alpha-D-manno-oct-2-ulosonate + CTP = CMP-3-deoxy-beta-D-manno-octulosonate + diphosphate. It participates in nucleotide-sugar biosynthesis; CMP-3-deoxy-D-manno-octulosonate biosynthesis; CMP-3-deoxy-D-manno-octulosonate from 3-deoxy-D-manno-octulosonate and CTP: step 1/1. It functions in the pathway bacterial outer membrane biogenesis; lipopolysaccharide biosynthesis. Its function is as follows. Activates KDO (a required 8-carbon sugar) for incorporation into bacterial lipopolysaccharide in Gram-negative bacteria. The polypeptide is 3-deoxy-manno-octulosonate cytidylyltransferase (Delftia acidovorans (strain DSM 14801 / SPH-1)).